We begin with the raw amino-acid sequence, 714 residues long: Structure-specific endonuclease subunit SLX4 1 (714 aa).

2 stretches are compositionally biased toward basic and acidic residues: residues 1–14 (MSPE…EDNL) and 24–34 (IHEETLAEESH). Disordered stretches follow at residues 1–116 (MSPE…QGSI) and 337–369 (DSSG…KTPQ). The span at 36-46 (QSIQRSISRLS) shows a compositional bias: low complexity. A compositionally biased stretch (basic residues) spans 79-92 (KTKKRKLKVSKPRK).

Belongs to the SLX4 family. As to quaternary structure, forms a heterodimer with SLX1. Post-translationally, phosphorylated in response to DNA damage.

It localises to the nucleus. Its function is as follows. Regulatory subunit of the SLX1-SLX4 structure-specific endonuclease that resolves DNA secondary structures generated during DNA repair and recombination. Has endonuclease activity towards branched DNA substrates, introducing single-strand cuts in duplex DNA close to junctions with ss-DNA. The polypeptide is Structure-specific endonuclease subunit SLX4 1 (Candida tropicalis (strain ATCC MYA-3404 / T1) (Yeast)).